The following is a 206-amino-acid chain: Cytochrome b6-f complex iron-sulfur subunit, chloroplastic (206 aa).

A chloroplast-targeting transit peptide spans 1–29 (MAMLSSRRVAAPAKASAIRRSRVMPVVRA). Residues 39 to 68 (MNKRNIMNLILAGGAGLPITTLALGYGAFF) form a helical membrane-spanning segment. The Rieske domain occupies 92–188 (AGEWLKTHLA…CDVAESGLVT (97 aa)). Residues Cys-134, His-136, Cys-152, and His-155 each contribute to the [2Fe-2S] cluster site. Cys-139 and Cys-154 are joined by a disulfide.

Belongs to the Rieske iron-sulfur protein family. In terms of assembly, the 4 large subunits of the cytochrome b6-f complex are cytochrome b6, subunit IV (17 kDa polypeptide, petD), cytochrome f and the Rieske protein, while the 4 small subunits are petG, petL, petM and petN. The complex functions as a dimer. It depends on [2Fe-2S] cluster as a cofactor.

It localises to the plastid. It is found in the chloroplast thylakoid membrane. It catalyses the reaction 2 oxidized [plastocyanin] + a plastoquinol + 2 H(+)(in) = 2 reduced [plastocyanin] + a plastoquinone + 4 H(+)(out). In terms of biological role, component of the cytochrome b6-f complex, which mediates electron transfer between photosystem II (PSII) and photosystem I (PSI), cyclic electron flow around PSI, and state transitions. This Chlamydomonas reinhardtii (Chlamydomonas smithii) protein is Cytochrome b6-f complex iron-sulfur subunit, chloroplastic (petC).